A 510-amino-acid chain; its full sequence is Lysine--tRNA ligase (510 aa).

Mg(2+)-binding residues include glutamate 420 and glutamate 427.

The protein belongs to the class-II aminoacyl-tRNA synthetase family. In terms of assembly, homodimer. Mg(2+) is required as a cofactor.

The protein resides in the cytoplasm. The enzyme catalyses tRNA(Lys) + L-lysine + ATP = L-lysyl-tRNA(Lys) + AMP + diphosphate. This is Lysine--tRNA ligase from Vibrio vulnificus (strain CMCP6).